A 997-amino-acid polypeptide reads, in one-letter code: uncharacterized protein (997 aa).

Belongs to the MG414/MG415 family.

This is an uncharacterized protein from Mycoplasma pneumoniae (strain ATCC 29342 / M129 / Subtype 1) (Mycoplasmoides pneumoniae).